Here is a 244-residue protein sequence, read N- to C-terminus: Sperm-egg fusion protein Juno (244 aa).

The N-terminal stretch at 1 to 19 (MAQWWLILLGLWTVLPSLA) is a signal peptide. 8 disulfide bridges follow: Cys27-Cys55, Cys47-Cys95, Cys56-Cys99, Cys79-Cys166, Cys86-Cys137, Cys126-Cys200, Cys130-Cys180, and Cys143-Cys160. Residues 62 to 81 (WEAHLDEPLLFNFSMTHCGL) are important for interaction with IZUMO1. Residue Asn73 is glycosylated (N-linked (GlcNAc...) asparagine). Positions 223-244 (SASAPQLSYSITAFSLCLLLHA) are excised as a propeptide.

This sequence belongs to the folate receptor family. Monomer. Interacts with IZUMO1; the interaction is direct. IZUMO1 and IZUMO1R/JUNO form a complex with 1:1 stoichiometry. Interacts with FCRL3/MAIA; FCRL3/MAIA replaces IZUMO1R/JUNO as IZUMO1 receptor after sperm-egg adhesion, thereby permitting species-specific gamete fusion. Interacts with WDR54. In terms of processing, the protein is rapidly cleaved following fertilization, being only weakly detectable in zona-intact fertilized eggs at telophase II and undetectable at the pronuclear stage. Sheding is probably required to block to polyspermy and ensuring egg fusion with a single sperm. As to expression, expressed in the oocyte (at protein level).

The protein resides in the cell membrane. The protein localises to the cell projection. It is found in the microvillus membrane. In terms of biological role, receptor for IZUMO1 present at the cell surface of oocytes (oolemma), which is essential for species-specific gamete recognition and fertilization. The IZUMO1:IZUMO1R/JUNO interaction is a necessary adhesion event between sperm and egg that is required for fertilization but is not sufficient for cell fusion. The ligand-receptor interaction probably does not act as a membrane 'fusogen'. Does not bind folate. This Rattus norvegicus (Rat) protein is Sperm-egg fusion protein Juno (Izumo1r).